The chain runs to 292 residues: UTP--glucose-1-phosphate uridylyltransferase (292 aa).

This sequence belongs to the UDPGP type 2 family.

It carries out the reaction alpha-D-glucose 1-phosphate + UTP + H(+) = UDP-alpha-D-glucose + diphosphate. Functionally, may play a role in stationary phase survival. The protein is UTP--glucose-1-phosphate uridylyltransferase (galU) of Mycoplasma genitalium (strain ATCC 33530 / DSM 19775 / NCTC 10195 / G37) (Mycoplasmoides genitalium).